An 848-amino-acid chain; its full sequence is Neprilysin-11 (848 aa).

Residues 1–74 are Cytoplasmic-facing; that stretch reads MPFGNDPPDY…WWKSRTTMEK (74 aa). The chain crosses the membrane as a helical; Signal-anchor for type II membrane protein span at residues 75–95; the sequence is LLLPVLLLFCLLTAVLLAVII. Residues 96 to 848 lie on the Extracellular side of the membrane; the sequence is NTDKRIEAMK…VNPDHKCIVW (753 aa). The disordered stretch occupies residues 108 to 161; that stretch reads HATQTEHAGFGDPTENPTKTAEDPRVPPIVPEAPTSPEPEVTTSTEKPKEPEVC. Residues 133 to 144 are compositionally biased toward pro residues; the sequence is VPPIVPEAPTSP. One can recognise a Peptidase M13 domain in the interval 160 to 848; sequence VCSTPGCVRA…VNPDHKCIVW (689 aa). Residues Cys-161 and Cys-166 are joined by a disulfide bond. Asn-178, Asn-249, Asn-284, Asn-312, Asn-337, Asn-364, Asn-398, and Asn-438 each carry an N-linked (GlcNAc...) asparagine glycan. Cystine bridges form between Cys-184/Cys-833, Cys-192/Cys-793, Cys-247/Cys-509, and Cys-719/Cys-845. His-682 lines the Zn(2+) pocket. The active site involves Glu-683. Zn(2+) is bound at residue His-686. A glycan (N-linked (GlcNAc...) asparagine) is linked at Asn-726. Glu-744 provides a ligand contact to Zn(2+). The active-site Proton donor is the Asp-748.

It belongs to the peptidase M13 family. Zn(2+) is required as a cofactor.

The protein localises to the cell membrane. In terms of biological role, probable cell surface protease. The protein is Neprilysin-11 (nep-11) of Caenorhabditis elegans.